Reading from the N-terminus, the 489-residue chain is Rhamnulokinase (489 aa).

Position 13-17 (13-17 (ASSGR)) interacts with ATP. Cys-68 and Cys-222 are joined by a disulfide. Substrate is bound by residues Gly-83 and 236-238 (HDT). Residue Asp-237 is the Proton acceptor of the active site. Thr-259 contacts ATP. Substrate is bound at residue Asn-296. ATP is bound at residue Gln-304. A disulfide bridge links Cys-353 with Cys-370. Gly-402 provides a ligand contact to ATP. An intrachain disulfide couples Cys-413 to Cys-417.

The protein belongs to the rhamnulokinase family. The cofactor is Mg(2+).

The enzyme catalyses L-rhamnulose + ATP = L-rhamnulose 1-phosphate + ADP + H(+). It functions in the pathway carbohydrate degradation; L-rhamnose degradation; glycerone phosphate from L-rhamnose: step 2/3. Functionally, involved in the catabolism of L-rhamnose (6-deoxy-L-mannose). Catalyzes the transfer of the gamma-phosphate group from ATP to the 1-hydroxyl group of L-rhamnulose to yield L-rhamnulose 1-phosphate. The protein is Rhamnulokinase of Salmonella schwarzengrund (strain CVM19633).